A 1026-amino-acid polypeptide reads, in one-letter code: PH and SEC7 domain-containing protein 1 (1026 aa).

Disordered stretches follow at residues 25-97, 126-196, 246-403, and 436-538; these read WLPE…PGAR, SWDL…PNGL, SLDP…GPDS, and PTQS…LDST. The span at 71 to 95 shows a compositional bias: pro residues; sequence RGPPSPRIAPSPWAPSSPTGQPPPG. 2 positions are modified to phosphoserine: Ser126 and Ser156. A compositionally biased stretch (low complexity) spans 168-184; the sequence is PGTQGLLQGPPTQPQVG. The span at 300–313 shows a compositional bias: acidic residues; the sequence is DIDEVLTEREEADS. A compositionally biased stretch (pro residues) spans 328–340; sequence ARPPAPRPGPCLG. The span at 349-367 shows a compositional bias: acidic residues; that stretch reads NEDEDEAGGEEDVDDEVFE. Residues 447–465 show a composition bias toward pro residues; the sequence is PPQPPAPRPDPPAPAPLAP. Residues 514–708 form the SEC7 domain; the sequence is GAAPLGSEPP…KALYSSIKNE (195 aa). A Phosphoserine modification is found at Ser722. A PH domain is found at 758 to 871; it reads AVYKHGALVR…WITRINVVAA (114 aa). Residues 900–926 adopt a coiled-coil conformation; sequence LSQEEQVRTHEAKLKAMASELREHRAT. Disordered stretches follow at residues 924–943 and 978–1026; these read RATQ…QRQK and AVAQ…RWKP. The span at 934 to 943 shows a compositional bias: basic and acidic residues; the sequence is GKEAEEQRQK. Residues 1000-1012 show a composition bias toward polar residues; it reads ANTSSQPRAQCSD.

This sequence belongs to the PSD family. As to quaternary structure, interacts with ACTN1.

The protein resides in the cell membrane. It localises to the cell projection. The protein localises to the ruffle membrane. It is found in the cleavage furrow. In terms of biological role, guanine nucleotide exchange factor for ARF6. Induces cytoskeletal remodeling. The chain is PH and SEC7 domain-containing protein 1 (PSD) from Bos taurus (Bovine).